The sequence spans 201 residues: Ribosomal RNA large subunit methyltransferase E (201 aa).

S-adenosyl-L-methionine-binding residues include Gly-40, Trp-42, Asp-62, Asp-78, and Asp-101. Catalysis depends on Lys-141, which acts as the Proton acceptor.

It belongs to the class I-like SAM-binding methyltransferase superfamily. RNA methyltransferase RlmE family.

The protein resides in the cytoplasm. It catalyses the reaction uridine(2552) in 23S rRNA + S-adenosyl-L-methionine = 2'-O-methyluridine(2552) in 23S rRNA + S-adenosyl-L-homocysteine + H(+). Functionally, specifically methylates the uridine in position 2552 of 23S rRNA at the 2'-O position of the ribose in the fully assembled 50S ribosomal subunit. This is Ribosomal RNA large subunit methyltransferase E from Anaplasma marginale (strain Florida).